The primary structure comprises 73 residues: Kappa-scoloptoxin(03)-Ssm1b (73 aa).

The first 23 residues, 1 to 23, serve as a signal peptide directing secretion; that stretch reads MKPSMAILLVIALIIFSLDKSYS. 3 disulfides stabilise this stretch: cysteine 32–cysteine 58, cysteine 41–cysteine 57, and cysteine 44–cysteine 67.

In terms of processing, contains 3 disulfide bonds. As to expression, expressed by the venom gland.

The protein localises to the secreted. Functionally, inhibits voltage-gated potassium channels. The sequence is that of Kappa-scoloptoxin(03)-Ssm1b from Scolopendra mutilans (Chinese red-headed centipede).